The sequence spans 359 residues: MRELPEFPWDVLLPYKKRAAAHPDGLVNLALGEPVDATPDVLRDALAAATDAPGYPPTEGTPALREAAAAWLRRRLGVTVDPSAVLPAVGTKELIAWLPAMLGTGPGDTVAFPRLAFPTFDVSARLAGARGRPVDSPLELGSEPVKVVWLNSPSNPEGRVLSVPELREIVAWARDRGAVLVNDECYIEYGWDRRPVSLLDSAVCGGSHDGLLAVHSLSKRSNLAGYRAGVCSGDPALIGRLLQVRKHAGHAVPAPVQAAMVAALEDDAHVERQRDRYAYRRRVLRTALEGAGFRVEHSEGGLFLWATRGEPCWPAVQKLADLGILVAPGAFYGEAGEQYVRIAFTATDERIAAAAARLT.

Positions 32, 92, and 155 each coordinate substrate. Residues 91 to 92 (TK), N155, Y186, and 216 to 218 (SLS) each bind pyridoxal 5'-phosphate. The residue at position 219 (K219) is an N6-(pyridoxal phosphate)lysine. Pyridoxal 5'-phosphate is bound at residue R227. R341 contributes to the substrate binding site.

The protein belongs to the class-I pyridoxal-phosphate-dependent aminotransferase family. The cofactor is pyridoxal 5'-phosphate.

It functions in the pathway antibiotic biosynthesis; oxytetracycline biosynthesis. In terms of biological role, involved in the biosynthesis of the tetracycline antibiotic, oxytetracycline. Catalyzes the conversion of 4-dedimethylamino-4-oxoanhydrotetracycline to yield 4-amino-4-de(dimethylamino)anhydrotetracycline (4-amino-ATC). The polypeptide is 4-dedimethylamino-4-oxo-anhydrotetracycline transaminase OxyQ (Streptomyces rimosus).